The following is a 549-amino-acid chain: Glucose-6-phosphate isomerase (549 aa).

N6-acetyllysine occurs at positions 80, 228, and 234. The active-site Proton donor is the Glu355. Active-site residues include His386 and Lys514.

Belongs to the GPI family.

The protein localises to the cytoplasm. The catalysed reaction is alpha-D-glucose 6-phosphate = beta-D-fructose 6-phosphate. It participates in carbohydrate biosynthesis; gluconeogenesis. The protein operates within carbohydrate degradation; glycolysis; D-glyceraldehyde 3-phosphate and glycerone phosphate from D-glucose: step 2/4. In terms of biological role, catalyzes the reversible isomerization of glucose-6-phosphate to fructose-6-phosphate. This Shigella flexneri protein is Glucose-6-phosphate isomerase.